The primary structure comprises 92 residues: MEIKSDHSEHGFQFPGTFELSVVGTAGKALETELPRLLALCGVELVQERISWKHSSTGKYVSVRIGFRALDREQYDAAHQVLRDHPEVKWTL.

The protein belongs to the UPF0250 family.

The polypeptide is UPF0250 protein PD_0532 (Xylella fastidiosa (strain Temecula1 / ATCC 700964)).